A 366-amino-acid polypeptide reads, in one-letter code: MNETGSIGIIETKYAEFKELILNNGSVLSPVVIAYETYGTLSSSKNNAILICHALSGDAHAAGYHSGSDKKPGWWDDYIGPGKSFDTNQYFIICSNVIGGCKGSSGPLSIHPETSTPYGSRFPFVSIQDMVKAQKLLVESLGIEKLFCVAGGSMGGMQALEWSIAYPNSLSNCIVMASTAEHSAMQIAFNEVGRQAILSDPNWKNGLYDENSPRKGLALARMVGHITYLSDDKMREKFGRNPPRGNILSTDFAVGSYLIYQGESFVDRFDANSYIYVTKALDHYSLGKGKELTAALSNATCRFLVVSYSSDWLYPPAQSREIVKSLEAADKRVFYVELQSGEGHDSFLLKNPKQIEILKGFLENPN.

The AB hydrolase-1 domain occupies 47-349; sequence NAILICHALS…SGEGHDSFLL (303 aa). The active-site Nucleophile is Ser-153. Position 221 (Arg-221) interacts with substrate. Catalysis depends on residues Asp-311 and His-344. Residue Asp-345 coordinates substrate.

This sequence belongs to the AB hydrolase superfamily. MetX family. In terms of assembly, homodimer.

It localises to the cytoplasm. The catalysed reaction is L-homoserine + acetyl-CoA = O-acetyl-L-homoserine + CoA. It participates in amino-acid biosynthesis; L-methionine biosynthesis via de novo pathway; O-acetyl-L-homoserine from L-homoserine: step 1/1. Transfers an acetyl group from acetyl-CoA to L-homoserine, forming acetyl-L-homoserine. The protein is Homoserine O-acetyltransferase of Leptospira interrogans serogroup Icterohaemorrhagiae serovar copenhageni (strain Fiocruz L1-130).